The chain runs to 256 residues: Small ribosomal subunit protein eS1 (256 aa).

Residues 1-18 (MAVGKNKRLSKGKKGVKK) show a composition bias toward basic residues. The tract at residues 1 to 21 (MAVGKNKRLSKGKKGVKKRTV) is disordered. N-acetylalanine; partial is present on alanine 2.

The protein belongs to the eukaryotic ribosomal protein eS1 family. As to quaternary structure, component of the small ribosomal subunit. Mature ribosomes consist of a small (40S) and a large (60S) subunit. The 40S subunit contains about 33 different proteins and 1 molecule of RNA (18S). The 60S subunit contains about 49 different proteins and 3 molecules of RNA (25S, 5.8S and 5S).

Its subcellular location is the cytoplasm. In Aspergillus niger (strain ATCC MYA-4892 / CBS 513.88 / FGSC A1513), this protein is Small ribosomal subunit protein eS1 (rps1).